Reading from the N-terminus, the 113-residue chain is Protein NATD1 (113 aa).

Positions 1-16 (MAQSPAAASPGAPEQG) are enriched in low complexity. The interval 1 to 20 (MAQSPAAASPGAPEQGCPIR) is disordered. Positions 22–112 (EHDRRRRQFT…PLPQYLERLQ (91 aa)) constitute an N-acetyltransferase domain.

Belongs to the NATD1 family.

The polypeptide is Protein NATD1 (NATD1) (Bos taurus (Bovine)).